The sequence spans 433 residues: Glutamate-1-semialdehyde 2,1-aminomutase (433 aa).

K271 carries the N6-(pyridoxal phosphate)lysine modification.

It belongs to the class-III pyridoxal-phosphate-dependent aminotransferase family. HemL subfamily. Homodimer. The cofactor is pyridoxal 5'-phosphate.

The protein resides in the cytoplasm. It catalyses the reaction (S)-4-amino-5-oxopentanoate = 5-aminolevulinate. Its pathway is porphyrin-containing compound metabolism; protoporphyrin-IX biosynthesis; 5-aminolevulinate from L-glutamyl-tRNA(Glu): step 2/2. It participates in porphyrin-containing compound metabolism; chlorophyll biosynthesis. The sequence is that of Glutamate-1-semialdehyde 2,1-aminomutase from Prochlorococcus marinus (strain SARG / CCMP1375 / SS120).